The primary structure comprises 430 residues: Histidine--tRNA ligase (430 aa).

Belongs to the class-II aminoacyl-tRNA synthetase family. In terms of assembly, homodimer.

Its subcellular location is the cytoplasm. It carries out the reaction tRNA(His) + L-histidine + ATP = L-histidyl-tRNA(His) + AMP + diphosphate + H(+). The chain is Histidine--tRNA ligase from Parasynechococcus marenigrum (strain WH8102).